A 472-amino-acid polypeptide reads, in one-letter code: MIMKLVEDLLNKNLDIDEYVERTYERIEKIEKKIKAFITIRDKEEVKREVREKLKNPKGKLSGILIAIKDNISTKGIRTTCASRMLEDYVPPYDATVIEKLKQEGAVILGKTNMDEFAMGSTTETSYFGPTRNPWDLERTPGGSSGGSGAALAAGIVDIALGSDTGGSIRAPAAYNAVFGLKPSYGTVSRFGLVAYANSLEQIGPMAKNAEDLALLYSIISGDDPKDATTIHFEPQVPEKVELKDVKIAVLKDIVEASDKPVVSIFNSTLDKLSSEGAIIKEVNLGYAEYALPAYYIIAMSEASSNLARFDGVRYGYSKYSEGNWRETFAKNRGEGFGIEVKRRILLGSFILSAGYYEEFYIKALKIRRLIKDNVDNILKEFDLIASPTMPILPPKIGEVVEDPIKMYAMDLNTVIANLAGVPALSQPAGFYNNLPIGLQLMGRYLSDYYIMAISAKIEKVLNLYDLTAPIS.

Active-site charge relay system residues include Lys-69 and Ser-144. Residue Ser-168 is the Acyl-ester intermediate of the active site.

This sequence belongs to the amidase family. GatA subfamily. Heterotrimer of A, B and C subunits.

The enzyme catalyses L-glutamyl-tRNA(Gln) + L-glutamine + ATP + H2O = L-glutaminyl-tRNA(Gln) + L-glutamate + ADP + phosphate + H(+). In terms of biological role, allows the formation of correctly charged Gln-tRNA(Gln) through the transamidation of misacylated Glu-tRNA(Gln) in organisms which lack glutaminyl-tRNA synthetase. The reaction takes place in the presence of glutamine and ATP through an activated gamma-phospho-Glu-tRNA(Gln). This Sulfurisphaera tokodaii (strain DSM 16993 / JCM 10545 / NBRC 100140 / 7) (Sulfolobus tokodaii) protein is Glutamyl-tRNA(Gln) amidotransferase subunit A.